A 331-amino-acid chain; its full sequence is Phosphoribosylformylglycinamidine cyclo-ligase (331 aa).

Belongs to the AIR synthase family.

It is found in the cytoplasm. The enzyme catalyses 2-formamido-N(1)-(5-O-phospho-beta-D-ribosyl)acetamidine + ATP = 5-amino-1-(5-phospho-beta-D-ribosyl)imidazole + ADP + phosphate + H(+). It functions in the pathway purine metabolism; IMP biosynthesis via de novo pathway; 5-amino-1-(5-phospho-D-ribosyl)imidazole from N(2)-formyl-N(1)-(5-phospho-D-ribosyl)glycinamide: step 2/2. In Clostridium tetani (strain Massachusetts / E88), this protein is Phosphoribosylformylglycinamidine cyclo-ligase.